We begin with the raw amino-acid sequence, 375 residues long: uncharacterized protein (375 aa).

7 helical membrane passes run 21-41 (LLLLIPLLVGLTLIIYGIVLF), 66-86 (IIVFVVGSIILFFTLASFCVS), 160-180 (LVGVLIALNLALSLIEIPGIV), 203-223 (LVGLLSTSLVALITPWLHLLI), 234-254 (FYMVNDFLVLWIFYFFFFHLF), 289-309 (VISFLCGFIEGLGFYFGYFLI), and 338-358 (FFLMTTTAIFSIKYIFEMLFF).

The protein resides in the cell membrane. This is an uncharacterized protein from Mycoplasma genitalium (strain ATCC 33530 / DSM 19775 / NCTC 10195 / G37) (Mycoplasmoides genitalium).